Reading from the N-terminus, the 532-residue chain is Calnexin homolog 2 (532 aa).

The N-terminal stretch at 1-25 (MRERIITFVSLLLVALLSFPSVSYC) is a signal peptide. The Lumenal portion of the chain corresponds to 26-468 (DDQTILYESF…EKAETQPNLT (443 aa)). Residues serine 34 and aspartate 65 each coordinate Ca(2+). Cysteine 110 and cysteine 145 are joined by a disulfide. An alpha-D-glucoside contacts are provided by tyrosine 114, lysine 116, tyrosine 136, and aspartate 143. The interval 208–302 (NLLSAEDFEP…DEEDGEWEAP (95 aa)) is disordered. The interval 225-358 (IPDPEDKKPE…RDIPNPDYFE (134 aa)) is p domain (Extended arm). Basic and acidic residues predominate over residues 226-242 (PDPEDKKPEDWDERAKI). Tandem repeats lie at residues 227–238 (DPEDKKPEDWDE), 244–255 (DPNAVKPDDWDE), 263–274 (DEEAEKPEGWLD), 282–293 (DPEASKPEDWDD), and 297–307 (GEWEAPKVSNT). 4 X approximate repeats stretches follow at residues 227–293 (DPED…DWDD) and 297–354 (GEWE…IPNP). Composition is skewed to acidic residues over residues 252 to 283 (DWDE…VEDP) and 290 to 299 (DWDDEEDGEW). Residues cysteine 309 and cysteine 315 are joined by a disulfide bond. Tandem repeats lie at residues 316–326 (GEWKRPMKRNP), 330–340 (GKWSSPLIDNP), and 344–354 (GIWKPRDIPNP). Glutamate 373 is an an alpha-D-glucoside binding site. Aspartate 384 is a binding site for Ca(2+). The N-linked (GlcNAc...) asparagine glycan is linked to asparagine 466. The helical transmembrane segment at 469 to 489 (IGVLISIVIVFLSLFFKLIFG) threads the bilayer. Residues 490–532 (GAKAKVEKKKPETAAETSTSEAKTEEKAEAVAAPRKRQTRRES) are Cytoplasmic-facing. A disordered region spans residues 493–532 (AKVEKKKPETAAETSTSEAKTEEKAEAVAAPRKRQTRRES). Positions 523 to 532 (PRKRQTRRES) are enriched in basic residues.

Belongs to the calreticulin family.

It is found in the endoplasmic reticulum membrane. Its function is as follows. Calcium-binding protein that interacts with newly synthesized monoglucosylated glycoproteins in the endoplasmic reticulum. It may act in assisting protein assembly and/or in the retention within the ER of unassembled protein subunits. It seems to play a major role in the quality control apparatus of the ER by the retention of incorrectly folded proteins. The chain is Calnexin homolog 2 from Arabidopsis thaliana (Mouse-ear cress).